The chain runs to 230 residues: NAD-dependent protein deacylase 1 (230 aa).

One can recognise a Deacetylase sirtuin-type domain in the interval 1–226 (MESGIPTYRE…SHLSAFLSRE (226 aa)). Residues Tyr-41 and Arg-44 each contribute to the substrate site. 75–78 (QNID) lines the NAD(+) pocket. Catalysis depends on His-93, which acts as the Proton acceptor. Zn(2+) is bound by residues Cys-101, Cys-104, Cys-128, and Cys-131. NAD(+)-binding positions include 168–170 (GTS), 194–196 (NTV), and Ala-212.

The protein belongs to the sirtuin family. Class III subfamily. Zn(2+) serves as cofactor.

Its subcellular location is the cytoplasm. The enzyme catalyses N(6)-acetyl-L-lysyl-[protein] + NAD(+) + H2O = 2''-O-acetyl-ADP-D-ribose + nicotinamide + L-lysyl-[protein]. It carries out the reaction N(6)-succinyl-L-lysyl-[protein] + NAD(+) + H2O = 2''-O-succinyl-ADP-D-ribose + nicotinamide + L-lysyl-[protein]. In terms of biological role, NAD-dependent lysine deacetylase and desuccinylase that specifically removes acetyl and succinyl groups on target proteins. Modulates the activities of several proteins which are inactive in their acylated form. This is NAD-dependent protein deacylase 1 from Pseudomonas syringae pv. tomato (strain ATCC BAA-871 / DC3000).